We begin with the raw amino-acid sequence, 519 residues long: UvrABC system protein C (519 aa).

Residues 9 to 87 (HLPGCYLFKN…IKKHWPRYNI (79 aa)) enclose the GIY-YIG domain. One can recognise a UVR domain in the interval 191 to 226 (RELIESMEKDMRELASRQQFEQAMALRDEIAALEYL).

It belongs to the UvrC family. In terms of assembly, interacts with UvrB in an incision complex.

It localises to the cytoplasm. The UvrABC repair system catalyzes the recognition and processing of DNA lesions. UvrC both incises the 5' and 3' sides of the lesion. The N-terminal half is responsible for the 3' incision and the C-terminal half is responsible for the 5' incision. The chain is UvrABC system protein C from Methanosarcina barkeri (strain Fusaro / DSM 804).